The following is a 268-amino-acid chain: MFGKPEGKPKGLNWLYRDTYIGKRKGITLGFSFAMQNDIDQELISDTQGPAPGINGQGKPSPGAGSVQVRVPYMILPNPITTPEVRNHPVDMRMYGADLAIHYGPLSFILEAGQHQFKNVFLDAQKLSEDFKNNWFIIKGAYALNPKSTTVFEPYVSYYIWDPDIKEDSKGRAYGDAANFIKGNKAGKEKATLGKISVTSLGVNIWYTKAKLMSLTFEYQIINEERNEITPLPFNSALSFSRHLPLIFLRFCSQSFPNSSPYLKYCPF.

The disordered stretch occupies residues 45 to 64 (SDTQGPAPGINGQGKPSPGA).

This is an uncharacterized protein from Aquifex aeolicus (strain VF5).